Reading from the N-terminus, the 130-residue chain is 3-aminoacrylate deaminase RutC (130 aa).

It belongs to the RutC family.

It carries out the reaction (Z)-3-aminoacrylate + H2O + H(+) = 3-oxopropanoate + NH4(+). Its function is as follows. Involved in pyrimidine catabolism. Catalyzes the deamination of 3-aminoacrylate to malonic semialdehyde, a reaction that can also occur spontaneously. RutC may facilitate the reaction and modulate the metabolic fitness, rather than catalyzing essential functions. This Klebsiella variicola (strain At-22) protein is 3-aminoacrylate deaminase RutC.